Here is a 243-residue protein sequence, read N- to C-terminus: tRNA1(Val) (adenine(37)-N6)-methyltransferase (243 aa).

Belongs to the methyltransferase superfamily. tRNA (adenine-N(6)-)-methyltransferase family.

The protein resides in the cytoplasm. The enzyme catalyses adenosine(37) in tRNA1(Val) + S-adenosyl-L-methionine = N(6)-methyladenosine(37) in tRNA1(Val) + S-adenosyl-L-homocysteine + H(+). In terms of biological role, specifically methylates the adenine in position 37 of tRNA(1)(Val) (anticodon cmo5UAC). This is tRNA1(Val) (adenine(37)-N6)-methyltransferase from Shewanella woodyi (strain ATCC 51908 / MS32).